We begin with the raw amino-acid sequence, 322 residues long: NADH-cytochrome b5 reductase 2 (322 aa).

A helical transmembrane segment spans residues 32–48 (LAPIYISVGLAGLGVGL). One can recognise an FAD-binding FR-type domain in the interval 72–176 (QGWVDLKLSE…KGPIPKYPWE (105 aa)). 179–214 (KHKHICLIAGGTGITPMYQLARQIFKNPEDQTKVTL) provides a ligand contact to FAD.

This sequence belongs to the flavoprotein pyridine nucleotide cytochrome reductase family. Requires FAD as cofactor.

The protein localises to the mitochondrion outer membrane. It catalyses the reaction 2 Fe(III)-[cytochrome b5] + NADH = 2 Fe(II)-[cytochrome b5] + NAD(+) + H(+). Its function is as follows. May mediate the reduction of outer membrane cytochrome b5. This Aspergillus clavatus (strain ATCC 1007 / CBS 513.65 / DSM 816 / NCTC 3887 / NRRL 1 / QM 1276 / 107) protein is NADH-cytochrome b5 reductase 2 (mcr1).